The sequence spans 212 residues: Peptide methionine sulfoxide reductase MsrA (212 aa).

The active site involves Cys-52.

This sequence belongs to the MsrA Met sulfoxide reductase family.

It catalyses the reaction L-methionyl-[protein] + [thioredoxin]-disulfide + H2O = L-methionyl-(S)-S-oxide-[protein] + [thioredoxin]-dithiol. It carries out the reaction [thioredoxin]-disulfide + L-methionine + H2O = L-methionine (S)-S-oxide + [thioredoxin]-dithiol. Its function is as follows. Has an important function as a repair enzyme for proteins that have been inactivated by oxidation. Catalyzes the reversible oxidation-reduction of methionine sulfoxide in proteins to methionine. This Escherichia fergusonii (strain ATCC 35469 / DSM 13698 / CCUG 18766 / IAM 14443 / JCM 21226 / LMG 7866 / NBRC 102419 / NCTC 12128 / CDC 0568-73) protein is Peptide methionine sulfoxide reductase MsrA.